Consider the following 628-residue polypeptide: Chaperone protein HtpG (628 aa).

The a; substrate-binding stretch occupies residues 1–337; it reads MSEKKYTFET…SADLPLNVSR (337 aa). Residues 338–554 are b; the sequence is EILQHNKVID…DYGMSLHMQK (217 aa). Residues 555–628 form a c region; the sequence is MMEEAGQSFM…FVKLVNKYIR (74 aa).

The protein belongs to the heat shock protein 90 family. In terms of assembly, homodimer.

It localises to the cytoplasm. Its function is as follows. Molecular chaperone. Has ATPase activity. This Francisella tularensis subsp. holarctica (strain FTNF002-00 / FTA) protein is Chaperone protein HtpG.